The following is a 156-amino-acid chain: Extracellular giant hemoglobin major globin subunit A1 (156 aa).

An N-terminal signal peptide occupies residues 1–16; sequence MKVLIIFACLVVMASA. In terms of domain architecture, Globin spans 17-156; it reads VCNRLEQILV…YERIASGISG (140 aa). Residues cysteine 18 and cysteine 146 are joined by a disulfide bond. Residue cysteine 79 coordinates hydrogen sulfide. Histidine 110 is a heme b binding site.

The protein belongs to the globin family. As to quaternary structure, the 400 kDa hemoglobin consists of a spherical 24-mer arranged as a double layer of dome-shaped dodecamers. Each dodecamer is composed of the 3-fold trimer of the tetramer A1-A2-B1-B2 having one intra-tetramer (A1-B2) disulfide bond and one inter-tetramer (B1-B2) disulfide bond per tetramer.

Its subcellular location is the secreted. Its function is as follows. The extracellular giant hemoglobin is able to bind and transport oxygen and hydrosulfide simultaneously and reversibly at two different sites. In Oligobrachia mashikoi (Beard worm), this protein is Extracellular giant hemoglobin major globin subunit A1 (ghbA1).